The chain runs to 91 residues: Cell division topological specificity factor (91 aa).

Belongs to the MinE family.

Functionally, prevents the cell division inhibition by proteins MinC and MinD at internal division sites while permitting inhibition at polar sites. This ensures cell division at the proper site by restricting the formation of a division septum at the midpoint of the long axis of the cell. The sequence is that of Cell division topological specificity factor from Erwinia tasmaniensis (strain DSM 17950 / CFBP 7177 / CIP 109463 / NCPPB 4357 / Et1/99).